We begin with the raw amino-acid sequence, 542 residues long: Amino-acid acetyltransferase, mitochondrial (542 aa).

A mitochondrion-targeting transit peptide spans 1-14 (MLFRRLLTTKVGYH). The region spanning 368 to 534 (AGSAQLPAHK…LREYITYVRD (167 aa)) is the N-acetyltransferase domain.

This sequence belongs to the acetyltransferase family.

The protein localises to the mitochondrion. The catalysed reaction is L-glutamate + acetyl-CoA = N-acetyl-L-glutamate + CoA + H(+). Its pathway is amino-acid biosynthesis; L-arginine biosynthesis; N(2)-acetyl-L-ornithine from L-glutamate: step 1/4. N-acetylglutamate synthase involved in arginine biosynthesis. The polypeptide is Amino-acid acetyltransferase, mitochondrial (ARG2) (Eremothecium gossypii (strain ATCC 10895 / CBS 109.51 / FGSC 9923 / NRRL Y-1056) (Yeast)).